Here is a 370-residue protein sequence, read N- to C-terminus: MKERDVNDAQETPPPLEGKVSAGVLAVVVYAAAFASDRWIPNSLLSLPLLIATLIAAIVTWWGVPKLRGLKLGQVIREEGPQAHLTKSGTPTMGGLLVVPVGVIVGGLISWSGQAAEQLLAVAFITLAYMVVGGIDDWRSLTKHTNTGLTPRGKLLLQALAAVIFLIWAGMRGWISGDVALPFDINLPLNWLIWPLAVFVFLAESNATNLTDGLDGLAAGCGALVFTGMALQLTLRGNSGDPSLAGFCMAMAGCWIGFLVHNRNPAKVFMGDTGSLAMGGALTAVALLTNSLWPLLIMGGIFLAESLSVIIQVWVFKATKGADGIGRRVFRMSPLHHHFELGGTPEQLVVPGFWLATVFLVLIGIFFKPN.

Helical transmembrane passes span 15 to 35 (PLEGKVSAGVLAVVVYAAAFA), 44 to 64 (LLSLPLLIATLIAAIVTWWGV), 93 to 113 (MGGLLVVPVGVIVGGLISWSG), 115 to 135 (AAEQLLAVAFITLAYMVVGGI), 155 to 175 (LLLQALAAVIFLIWAGMRGWI), 183 to 203 (FDINLPLNWLIWPLAVFVFLA), 213 to 233 (GLDGLAAGCGALVFTGMALQL), 240 to 260 (GDPSLAGFCMAMAGCWIGFLV), 268 to 288 (VFMGDTGSLAMGGALTAVALL), 296 to 316 (LIMGGIFLAESLSVIIQVWVF), and 347 to 367 (QLVVPGFWLATVFLVLIGIFF).

This sequence belongs to the glycosyltransferase 4 family. MraY subfamily. Mg(2+) is required as a cofactor.

It localises to the cell inner membrane. The catalysed reaction is UDP-N-acetyl-alpha-D-muramoyl-L-alanyl-gamma-D-glutamyl-meso-2,6-diaminopimeloyl-D-alanyl-D-alanine + di-trans,octa-cis-undecaprenyl phosphate = di-trans,octa-cis-undecaprenyl diphospho-N-acetyl-alpha-D-muramoyl-L-alanyl-D-glutamyl-meso-2,6-diaminopimeloyl-D-alanyl-D-alanine + UMP. Its pathway is cell wall biogenesis; peptidoglycan biosynthesis. Catalyzes the initial step of the lipid cycle reactions in the biosynthesis of the cell wall peptidoglycan: transfers peptidoglycan precursor phospho-MurNAc-pentapeptide from UDP-MurNAc-pentapeptide onto the lipid carrier undecaprenyl phosphate, yielding undecaprenyl-pyrophosphoryl-MurNAc-pentapeptide, known as lipid I. This Synechococcus sp. (strain CC9311) protein is Phospho-N-acetylmuramoyl-pentapeptide-transferase.